The following is a 378-amino-acid chain: Anhydro-N-acetylmuramic acid kinase (378 aa).

ATP is bound at residue 22-29; that stretch reads GTSLDGAD.

This sequence belongs to the anhydro-N-acetylmuramic acid kinase family.

The catalysed reaction is 1,6-anhydro-N-acetyl-beta-muramate + ATP + H2O = N-acetyl-D-muramate 6-phosphate + ADP + H(+). Its pathway is amino-sugar metabolism; 1,6-anhydro-N-acetylmuramate degradation. The protein operates within cell wall biogenesis; peptidoglycan recycling. In terms of biological role, catalyzes the specific phosphorylation of 1,6-anhydro-N-acetylmuramic acid (anhMurNAc) with the simultaneous cleavage of the 1,6-anhydro ring, generating MurNAc-6-P. Is required for the utilization of anhMurNAc either imported from the medium or derived from its own cell wall murein, and thus plays a role in cell wall recycling. The sequence is that of Anhydro-N-acetylmuramic acid kinase from Bordetella petrii (strain ATCC BAA-461 / DSM 12804 / CCUG 43448).